Here is a 288-residue protein sequence, read N- to C-terminus: Nucleotide-binding protein Neut_1559 (288 aa).

8-15 is a binding site for ATP; sequence GLSGSGKS. 57–60 contributes to the GTP binding site; it reads DMRS.

The protein belongs to the RapZ-like family.

Displays ATPase and GTPase activities. This is Nucleotide-binding protein Neut_1559 from Nitrosomonas eutropha (strain DSM 101675 / C91 / Nm57).